The sequence spans 132 residues: Pre-histone-like nucleoprotein (132 aa).

The propeptide occupies 2 to 23 (AILISPSNNTGWGLGTHKLFGG). The Nuclear localization signal motif lies at 124 to 132 (RRKRRVRSK).

This sequence belongs to the adenoviridae histone-like nucleoprotein family. As to quaternary structure, interacts with the core-capsid bridging protein; this interaction bridges the virus core to the capsid. Interacts with host NPM1; this interaction might play a role in placing the pre-histone-like nucleoprotein on the viral DNA or regulating viral gene expression. Interacts with host HMGB1; this interaction inhibits host immune response. In terms of processing, cleaved near the N-terminus by the viral protease during virion maturation to form the mature protein.

Its subcellular location is the virion. It localises to the host nucleus. It is found in the host nucleolus. Functionally, plays a role in the inhibition of host immune response within the nucleus. Interacts with cellular nucleosomes and immobilizes the host immune danger signal HMGB1 on chromatin. In turn, prevents HMGB1 release out of the cell and thus decreases inflammation. Also plays a role in the wrapping and condensation of the viral DNA. May also promote viral genome import into the nucleus. In Canine adenovirus serotype 1 (strain CLL) (CAdV-1), this protein is Pre-histone-like nucleoprotein.